The primary structure comprises 364 residues: DNA polymerase IV (364 aa).

In terms of domain architecture, UmuC spans 14–198 (IIHIDMDAFF…LPIEKFHGVG (185 aa)). Positions 18 and 116 each coordinate Mg(2+). Residue Glu-117 is part of the active site.

It belongs to the DNA polymerase type-Y family. Monomer. Requires Mg(2+) as cofactor.

It localises to the cytoplasm. The enzyme catalyses DNA(n) + a 2'-deoxyribonucleoside 5'-triphosphate = DNA(n+1) + diphosphate. Functionally, poorly processive, error-prone DNA polymerase involved in untargeted mutagenesis. Copies undamaged DNA at stalled replication forks, which arise in vivo from mismatched or misaligned primer ends. These misaligned primers can be extended by PolIV. Exhibits no 3'-5' exonuclease (proofreading) activity. May be involved in translesional synthesis, in conjunction with the beta clamp from PolIII. In Streptococcus pyogenes serotype M4 (strain MGAS10750), this protein is DNA polymerase IV.